The chain runs to 257 residues: tRNA pseudouridine synthase A (257 aa).

The Nucleophile role is filled by aspartate 53. Residue tyrosine 111 coordinates substrate.

It belongs to the tRNA pseudouridine synthase TruA family. Homodimer.

The enzyme catalyses uridine(38/39/40) in tRNA = pseudouridine(38/39/40) in tRNA. Formation of pseudouridine at positions 38, 39 and 40 in the anticodon stem and loop of transfer RNAs. The polypeptide is tRNA pseudouridine synthase A (Xylella fastidiosa (strain M23)).